Reading from the N-terminus, the 427-residue chain is Probable anaerobic glycerol-3-phosphate dehydrogenase subunit B (427 aa).

This sequence belongs to the anaerobic G-3-P dehydrogenase subunit B family. Requires FMN as cofactor.

It catalyses the reaction a quinone + sn-glycerol 3-phosphate = dihydroxyacetone phosphate + a quinol. Its pathway is polyol metabolism; glycerol degradation via glycerol kinase pathway; glycerone phosphate from sn-glycerol 3-phosphate (anaerobic route): step 1/1. The polypeptide is Probable anaerobic glycerol-3-phosphate dehydrogenase subunit B (Halobacterium salinarum (strain ATCC 29341 / DSM 671 / R1)).